Reading from the N-terminus, the 141-residue chain is Hemoglobin subunit alpha-D (141 aa).

The Globin domain maps to 1–141; sequence MLTADDKKLI…VASVLAEKYR (141 aa). 2 residues coordinate heme b: His-58 and His-87.

Belongs to the globin family. Heterotetramer of two alpha-D chains and two beta chains. In terms of tissue distribution, red blood cells.

Its function is as follows. Involved in oxygen transport from the lung to the various peripheral tissues. This Rhea americana (Greater rhea) protein is Hemoglobin subunit alpha-D (HBAD).